A 972-amino-acid chain; its full sequence is UvrABC system protein A (972 aa).

An ATP-binding site is contributed by 32 to 39; that stretch reads GLSGSGKS. Residues 257-285 form a C4-type; atypical zinc finger; that stretch reads CPNGHALAVDDLEPRSFSFNSPYGACPEC. ABC transporter domains follow at residues 315–601 and 621–950; these read WSNG…KDSI and VDPR…KFLA. Residue 654 to 661 participates in ATP binding; it reads GVSGSGKS. A C4-type zinc finger spans residues 753–779; that stretch reads CEACTGDGTIKIEMNFLPDVYVPCEVC.

It belongs to the ABC transporter superfamily. UvrA family. In terms of assembly, forms a heterotetramer with UvrB during the search for lesions.

The protein localises to the cytoplasm. Functionally, the UvrABC repair system catalyzes the recognition and processing of DNA lesions. UvrA is an ATPase and a DNA-binding protein. A damage recognition complex composed of 2 UvrA and 2 UvrB subunits scans DNA for abnormalities. When the presence of a lesion has been verified by UvrB, the UvrA molecules dissociate. This Mycobacterium bovis (strain ATCC BAA-935 / AF2122/97) protein is UvrABC system protein A.